The sequence spans 304 residues: Non-specific ribonucleoside hydrolase RihC (304 aa).

Residue histidine 233 is part of the active site.

Belongs to the IUNH family. RihC subfamily.

Hydrolyzes both purine and pyrimidine ribonucleosides with a broad-substrate specificity. This is Non-specific ribonucleoside hydrolase RihC from Shigella flexneri serotype 5b (strain 8401).